We begin with the raw amino-acid sequence, 584 residues long: Aspartate--tRNA ligase (584 aa).

E169 is an L-aspartate binding site. The interval 193 to 196 (QLFK) is aspartate. R215 lines the L-aspartate pocket. ATP-binding positions include 215 to 217 (RDE) and Q224. H446 contributes to the L-aspartate binding site. E480 contacts ATP. L-aspartate is bound at residue R487. Position 532-535 (532-535 (GLDR)) interacts with ATP.

Belongs to the class-II aminoacyl-tRNA synthetase family. Type 1 subfamily. In terms of assembly, homodimer.

Its subcellular location is the cytoplasm. It carries out the reaction tRNA(Asp) + L-aspartate + ATP = L-aspartyl-tRNA(Asp) + AMP + diphosphate. In terms of biological role, catalyzes the attachment of L-aspartate to tRNA(Asp) in a two-step reaction: L-aspartate is first activated by ATP to form Asp-AMP and then transferred to the acceptor end of tRNA(Asp). The protein is Aspartate--tRNA ligase of Buchnera aphidicola subsp. Schizaphis graminum (strain Sg).